Consider the following 226-residue polypeptide: Urease accessory protein UreF (226 aa).

Belongs to the UreF family. In terms of assembly, ureD, UreF and UreG form a complex that acts as a GTP-hydrolysis-dependent molecular chaperone, activating the urease apoprotein by helping to assemble the nickel containing metallocenter of UreC. The UreE protein probably delivers the nickel.

The protein localises to the cytoplasm. Functionally, required for maturation of urease via the functional incorporation of the urease nickel metallocenter. The chain is Urease accessory protein UreF from Burkholderia mallei (strain NCTC 10247).